Reading from the N-terminus, the 57-residue chain is uncharacterized protein (57 aa).

Residues 26–57 (VVSTRKRLKQNTNTPPHYDTSEDEDEDNYYNY) are disordered. The segment covering 46 to 57 (SEDEDEDNYYNY) has biased composition (acidic residues).

This is an uncharacterized protein from Autographa californica nuclear polyhedrosis virus (AcMNPV).